A 566-amino-acid polypeptide reads, in one-letter code: Cytoplasmic polyadenylation element-binding protein 2 (566 aa).

Disordered regions lie at residues 17–46 and 64–98; these read FWGN…SVEG and LERL…IQEQ. A compositionally biased stretch (acidic residues) spans 87–98; sequence DSEEEEEDIQEQ. The RRM domain occupies 430-512; the sequence is MVAFIGGVPR…KRVEIKPYFF (83 aa).

Its function is as follows. Cytoplasmic polyadenylation element binding protein that binds to and regulates the translation of specific mRNAs. The chain is Cytoplasmic polyadenylation element-binding protein 2 (cpb-2) from Caenorhabditis briggsae.